Reading from the N-terminus, the 321-residue chain is MTLNLAQRVLNQESLTKDEAISIFENAEIDTFDLLNEAYTVRKHYYGKKVKLNMILNAKSGICAEDCGYCGQSVKMKEKQRYALVEQDQIKEGAQVATENQIGTYCIVMSGRGPSNREVDHICETVEDIKKIHPQLKICACLGLTKEEQAKKLKAAGVDRYNHNLNTSERYHDEVVTTHTYEDRVNTVEMMKDNNISPCSGVICGMGESNEDIIDMAFALRAIDADSIPINFLHPIKGTKFGGLDLLSPMKCLRIIAMFRLINPTKEIRIAGGREVNLRSLQPLALKAANSIFVGDYLITGGQPNEEDYRMIEDLGFEIDS.

The Radical SAM core domain occupies 45-271 (YYGKKVKLNM…INPTKEIRIA (227 aa)). Residues Cys-63, Cys-67, and Cys-70 each contribute to the [4Fe-4S] cluster site. Positions 106, 139, 199, and 269 each coordinate [2Fe-2S] cluster.

It belongs to the radical SAM superfamily. Biotin synthase family. As to quaternary structure, homodimer. [4Fe-4S] cluster is required as a cofactor. Requires [2Fe-2S] cluster as cofactor.

It carries out the reaction (4R,5S)-dethiobiotin + (sulfur carrier)-SH + 2 reduced [2Fe-2S]-[ferredoxin] + 2 S-adenosyl-L-methionine = (sulfur carrier)-H + biotin + 2 5'-deoxyadenosine + 2 L-methionine + 2 oxidized [2Fe-2S]-[ferredoxin]. It functions in the pathway cofactor biosynthesis; biotin biosynthesis; biotin from 7,8-diaminononanoate: step 2/2. Catalyzes the conversion of dethiobiotin (DTB) to biotin by the insertion of a sulfur atom into dethiobiotin via a radical-based mechanism. In Staphylococcus epidermidis (strain ATCC 35984 / DSM 28319 / BCRC 17069 / CCUG 31568 / BM 3577 / RP62A), this protein is Biotin synthase.